Reading from the N-terminus, the 542-residue chain is Putative sodium-dependent excitatory amino acid transporter glt-6 (542 aa).

Residues 1–15 are Cytoplasmic-facing; sequence MKSKRRDDIVQFCRE. 3 helical membrane-spanning segments follow: residues 16–36, 55–75, and 93–113; these read NTLL…GFGL, IFMQ…LISA, and LYYL…VTVI. Topologically, residues 114-191 are extracellular; it reads HPGDPSIKGT…IVKRSIGMTK (78 aa). N-linked (GlcNAc...) asparagine glycosylation is present at Asn-175. The next 5 helical transmembrane spans lie at 192-212, 234-254, 265-285, 303-323, and 386-406; these read GMNI…ISQL, VVTL…GNLL, VLAL…IITV, GMIQ…TLPM, and TIAS…LLIL. Residues 505–517 show a composition bias toward low complexity; that stretch reads RIGSRIGSRRPSS. The disordered stretch occupies residues 505 to 542; it reads RIGSRIGSRRPSSTNLHLSWRNNNIEPPYTPLPNDENV. A compositionally biased stretch (polar residues) spans 518–529; sequence TNLHLSWRNNNI.

It belongs to the dicarboxylate/amino acid:cation symporter (DAACS) (TC 2.A.23) family.

Its subcellular location is the membrane. This Caenorhabditis elegans protein is Putative sodium-dependent excitatory amino acid transporter glt-6 (glt-6).